The following is a 253-amino-acid chain: Phosphoribosylaminoimidazole-succinocarboxamide synthase (253 aa).

The protein belongs to the SAICAR synthetase family.

It carries out the reaction 5-amino-1-(5-phospho-D-ribosyl)imidazole-4-carboxylate + L-aspartate + ATP = (2S)-2-[5-amino-1-(5-phospho-beta-D-ribosyl)imidazole-4-carboxamido]succinate + ADP + phosphate + 2 H(+). Its pathway is purine metabolism; IMP biosynthesis via de novo pathway; 5-amino-1-(5-phospho-D-ribosyl)imidazole-4-carboxamide from 5-amino-1-(5-phospho-D-ribosyl)imidazole-4-carboxylate: step 1/2. In Dinoroseobacter shibae (strain DSM 16493 / NCIMB 14021 / DFL 12), this protein is Phosphoribosylaminoimidazole-succinocarboxamide synthase.